We begin with the raw amino-acid sequence, 1040 residues long: Kinesin-like protein KIN-14H (1040 aa).

One can recognise a Calponin-homology (CH) domain in the interval 54-176; that stretch reads DLRRYEAARW…CVLALKSYRE (123 aa). A disordered region spans residues 208–242; that stretch reads SEVPVDAVTNSPSSTPSSEQPLLDQSDSNTKNDGT. Polar residues predominate over residues 215-242; it reads VTNSPSSTPSSEQPLLDQSDSNTKNDGT. Residues 434 to 754 enclose the Kinesin motor domain; sequence SIRVYCRVRP…LKFAERVATV (321 aa). 517–524 lines the ATP pocket; that stretch reads GQTGSGKT. A coiled-coil region spans residues 761–796; that stretch reads VNKDTSEVKELKEQIASLKLALARKESGADQTQLQR. Residues 809–818 show a composition bias toward low complexity; that stretch reads LGVSSSFSKS. 3 disordered regions span residues 809 to 871, 887 to 926, and 969 to 1040; these read LGVS…GKEE, EDEI…KCNS, and MPRP…QNPK. A compositionally biased stretch (polar residues) spans 840-851; the sequence is IEGQSDSASSLD. The span at 887-923 shows a compositional bias: basic and acidic residues; it reads EDEITRSSKPENRAHTQLEKRTSSLKREATRGVDKNK. Residues 1018–1031 show a composition bias toward polar residues; that stretch reads SPGQTSSRHNNSTV.

This sequence belongs to the TRAFAC class myosin-kinesin ATPase superfamily. Kinesin family. KIN-14 subfamily.

This Arabidopsis thaliana (Mouse-ear cress) protein is Kinesin-like protein KIN-14H.